A 358-amino-acid polypeptide reads, in one-letter code: Type II restriction enzyme SacI (358 aa).

The catalysed reaction is Endonucleolytic cleavage of DNA to give specific double-stranded fragments with terminal 5'-phosphates.. A subtype P restriction enzyme that recognizes the double-stranded sequence 5'-GAGCTC-3' and cleaves after T-5. The chain is Type II restriction enzyme SacI from Streptomyces achromogenes.